A 651-amino-acid chain; its full sequence is UvrABC system protein B (651 aa).

The region spanning 25-178 (RGISCGAKEQ…CQLQERLVEL (154 aa)) is the Helicase ATP-binding domain. ATP is bound at residue 38 to 45 (GVTGSGKT). Positions 91-114 (YYDYYQPEAYIPQSDVYIEKDALI) match the Beta-hairpin motif. One can recognise a Helicase C-terminal domain in the interval 427 to 591 (DGQIHDVMCE…IVPRTIQKPV (165 aa)). A disordered region spans residues 593–615 (TSLSERVGSSRKKVSRDTNTDPA). Residues 616–651 (NRDIVELQKEMLLCAENLDFERAVEIRNEIKRLTAP) form the UVR domain.

This sequence belongs to the UvrB family. As to quaternary structure, forms a heterotetramer with UvrA during the search for lesions. Interacts with UvrC in an incision complex.

It localises to the cytoplasm. Functionally, the UvrABC repair system catalyzes the recognition and processing of DNA lesions. A damage recognition complex composed of 2 UvrA and 2 UvrB subunits scans DNA for abnormalities. Upon binding of the UvrA(2)B(2) complex to a putative damaged site, the DNA wraps around one UvrB monomer. DNA wrap is dependent on ATP binding by UvrB and probably causes local melting of the DNA helix, facilitating insertion of UvrB beta-hairpin between the DNA strands. Then UvrB probes one DNA strand for the presence of a lesion. If a lesion is found the UvrA subunits dissociate and the UvrB-DNA preincision complex is formed. This complex is subsequently bound by UvrC and the second UvrB is released. If no lesion is found, the DNA wraps around the other UvrB subunit that will check the other stand for damage. In Anaplasma marginale (strain Florida), this protein is UvrABC system protein B.